Here is a 197-residue protein sequence, read N- to C-terminus: Endonuclease V (197 aa).

Residues Asp-37 and Glu-101 each contribute to the Mg(2+) site.

The protein belongs to the endonuclease V family. Mg(2+) serves as cofactor.

The protein resides in the cytoplasm. The enzyme catalyses Endonucleolytic cleavage at apurinic or apyrimidinic sites to products with a 5'-phosphate.. In terms of biological role, DNA repair enzyme involved in the repair of deaminated bases. Selectively cleaves double-stranded DNA at the second phosphodiester bond 3' to a deoxyinosine leaving behind the intact lesion on the nicked DNA. This chain is Endonuclease V, found in Thermococcus kodakarensis (strain ATCC BAA-918 / JCM 12380 / KOD1) (Pyrococcus kodakaraensis (strain KOD1)).